A 429-amino-acid polypeptide reads, in one-letter code: Ribosomal RNA small subunit methyltransferase B (429 aa).

Residues 254 to 260 (CAAPGGK), aspartate 277, aspartate 303, and aspartate 322 contribute to the S-adenosyl-L-methionine site. Catalysis depends on cysteine 375, which acts as the Nucleophile.

The protein belongs to the class I-like SAM-binding methyltransferase superfamily. RsmB/NOP family.

The protein localises to the cytoplasm. It carries out the reaction cytidine(967) in 16S rRNA + S-adenosyl-L-methionine = 5-methylcytidine(967) in 16S rRNA + S-adenosyl-L-homocysteine + H(+). Its function is as follows. Specifically methylates the cytosine at position 967 (m5C967) of 16S rRNA. The polypeptide is Ribosomal RNA small subunit methyltransferase B (Yersinia enterocolitica serotype O:8 / biotype 1B (strain NCTC 13174 / 8081)).